The following is a 969-amino-acid chain: Activity-dependent neuroprotective protein a (969 aa).

A C2H2-type 1 zinc finger spans residues phenylalanine 74–histidine 97. A C2H2-type 2; atypical zinc finger spans residues leucine 107–histidine 129. C2H2-type zinc fingers lie at residues tyrosine 169–histidine 192 and isoleucine 221–histidine 244. The segment at lysine 401 to histidine 423 adopts a C2H2-type 5; atypical zinc-finger fold. The C2H2-type 6; atypical zinc-finger motif lies at serine 443–histidine 464. The C2H2-type 7 zinc finger occupies leucine 466–histidine 489. The C2H2-type 8; atypical zinc finger occupies threonine 583–histidine 608. The segment at tyrosine 623 to histidine 647 adopts a C2H2-type 9; atypical zinc-finger fold. Residues lysine 659–lysine 689 are disordered. Positions alanine 732–phenylalanine 774 form a DNA-binding region, homeobox. Residues aspartate 911–serine 949 form a disordered region. Positions serine 929–serine 946 are enriched in polar residues.

In terms of assembly, interacts with catenin beta-1/ctnnb1.

The protein resides in the nucleus. Its function is as follows. May be involved in transcriptional regulation. Positively modulates wnt-beta-catenin/ctnnb1 signaling. Required for embryonic neurogenesis. Required for progression through late erythroid differentiation. The sequence is that of Activity-dependent neuroprotective protein a from Danio rerio (Zebrafish).